The chain runs to 535 residues: BAR/IMD domain-containing adapter protein 2 (535 aa).

An IMD domain is found at 1 to 250; that stretch reads MSLSRSEEMH…AQLMQQMANS (250 aa). Residues 1–251 adopt a coiled-coil conformation; the sequence is MSLSRSEEMH…QLMQQMANSN (251 aa). Phosphoserine is present on residues serine 262, serine 324, serine 326, and serine 337. Positions 308-370 are disordered; sequence SEDYNPWADR…TLPRSSSMAA (63 aa). Low complexity predominate over residues 321–335; it reads QPKSLSPPQSQSKLS. A Phosphothreonine modification is found at threonine 341. Position 347 is a phosphoserine (serine 347). Positions 349-368 are enriched in polar residues; the sequence is TPKNSYATTENKTLPRSSSM. Position 361 is a phosphothreonine (threonine 361). Residues serine 367, serine 385, serine 396, and serine 455 each carry the phosphoserine modification. The 64-residue stretch at 375–438 folds into the SH3 domain; sequence NGRMRVKAIF…PFSYTRVLDS (64 aa). The segment at 445–486 is disordered; it reads HMSLQQGKSSSTGNLLDKDDLALPPPDYGTSSRAFPSQTAGT. Polar residues-rich tracts occupy residues 447–458 and 473–486; these read SLQQGKSSSTGN and GTSSRAFPSQTAGT.

In terms of assembly, homodimer. Interacts with CDC42 and RAC1 that have been activated by GTP binding. Binds TIAM1. Interacts with ATN1, ADGRB1, DIAPH1, EPS8, SHANK1, SHANK2, SHANK3, WASF1 and WASF2. Interacts with ENAH after recruitment of CDC42. Post-translationally, phosphorylated on tyrosine residues by INSR in response to insulin treatment. As to expression, ubiquitous.

It localises to the cytoplasm. It is found in the membrane. The protein resides in the cell projection. Its subcellular location is the filopodium. The protein localises to the ruffle. It localises to the cytoskeleton. Functionally, adapter protein that links membrane-bound small G-proteins to cytoplasmic effector proteins. Necessary for CDC42-mediated reorganization of the actin cytoskeleton and for RAC1-mediated membrane ruffling. Involved in the regulation of the actin cytoskeleton by WASF family members and the Arp2/3 complex. Plays a role in neurite growth. Acts syngeristically with ENAH to promote filipodia formation. Plays a role in the reorganization of the actin cytoskeleton in response to bacterial infection. Participates in actin bundling when associated with EPS8, promoting filopodial protrusions. This chain is BAR/IMD domain-containing adapter protein 2 (Baiap2), found in Rattus norvegicus (Rat).